A 407-amino-acid chain; its full sequence is MKSILWHNLKLCAHGDPNDTIADAAIAVNGDGTIAWTGRASDVPAGYVHWPREDLRGAWVTPGLVDCHTHLVYGGQRADEFAQRLAGASYEEIARRGGGIVSTVRATRDASEAALFEQACARLRPLLAEGVTAIEIKSGYGLELASERRMLRVARQLGERFPVSVYTTFLGAHALPPEYAGRADEYIDEVCERMLPALADEGLVDAVDVFCERIGFTLAQSERVFEAAARRGLPVKMHAEQLSNGGGSALAARYRALSADHLEYLDAAGVAAMRASGTTAVLLPGAYYFIRETKLPPIDLLRRHGVPIALATDHNPGTSPLTSLLLTMNMGCTVFKLTVQEALLGVTRHAAAALGASDRHGSLAPGRQADFAVWPVSTLAELAYWFGRPLCERVVKGGVTVFTRDAR.

Residues His-68 and His-70 each contribute to the Fe(3+) site. Zn(2+) is bound by residues His-68 and His-70. 4-imidazolone-5-propanoate-binding residues include Arg-77, Tyr-140, and His-173. N-formimidoyl-L-glutamate is bound at residue Tyr-140. His-238 contacts Fe(3+). His-238 serves as a coordination point for Zn(2+). A 4-imidazolone-5-propanoate-binding site is contributed by Gln-241. Position 313 (Asp-313) interacts with Fe(3+). Residue Asp-313 coordinates Zn(2+). N-formimidoyl-L-glutamate is bound by residues Asn-315 and Gly-317. Thr-318 provides a ligand contact to 4-imidazolone-5-propanoate.

This sequence belongs to the metallo-dependent hydrolases superfamily. HutI family. Zn(2+) serves as cofactor. It depends on Fe(3+) as a cofactor.

The protein resides in the cytoplasm. It carries out the reaction 4-imidazolone-5-propanoate + H2O = N-formimidoyl-L-glutamate. Its pathway is amino-acid degradation; L-histidine degradation into L-glutamate; N-formimidoyl-L-glutamate from L-histidine: step 3/3. Functionally, catalyzes the hydrolytic cleavage of the carbon-nitrogen bond in imidazolone-5-propanoate to yield N-formimidoyl-L-glutamate. It is the third step in the universal histidine degradation pathway. This Burkholderia pseudomallei (strain 668) protein is Imidazolonepropionase.